We begin with the raw amino-acid sequence, 212 residues long: NAD(P)H-hydrate epimerase (212 aa).

Residues 11 to 212 (MRHYDSYTIN…ANDMGTYAVD (202 aa)) enclose the YjeF N-terminal domain. Residue 60 to 64 (NNGGD) participates in (6S)-NADPHX binding. K(+) is bound by residues Asn-61 and Asp-123. Residues 127–133 (GIGIDRA), Tyr-138, and Asp-156 each bind (6S)-NADPHX. K(+) is bound at residue Ser-159.

Belongs to the NnrE/AIBP family. K(+) serves as cofactor.

The catalysed reaction is (6R)-NADHX = (6S)-NADHX. It carries out the reaction (6R)-NADPHX = (6S)-NADPHX. Catalyzes the epimerization of the S- and R-forms of NAD(P)HX, a damaged form of NAD(P)H that is a result of enzymatic or heat-dependent hydration. This is a prerequisite for the S-specific NAD(P)H-hydrate dehydratase to allow the repair of both epimers of NAD(P)HX. The chain is NAD(P)H-hydrate epimerase from Limosilactobacillus reuteri (strain ATCC 55730 / SD2112) (Lactobacillus reuteri).